The chain runs to 219 residues: Mediator of RNA polymerase II transcription subunit 20 (219 aa).

Belongs to the Mediator complex subunit 20 family. As to quaternary structure, component of the Mediator complex.

The protein resides in the nucleus. Component of the Mediator complex, a coactivator involved in the regulated transcription of nearly all RNA polymerase II-dependent genes. Mediator functions as a bridge to convey information from gene-specific regulatory proteins to the basal RNA polymerase II transcription machinery. Mediator is recruited to promoters by direct interactions with regulatory proteins and serves as a scaffold for the assembly of a functional preinitiation complex with RNA polymerase II and the general transcription factors. This chain is Mediator of RNA polymerase II transcription subunit 20 (MED20), found in Aedes aegypti (Yellowfever mosquito).